We begin with the raw amino-acid sequence, 663 residues long: Bifunctional polymyxin resistance protein ArnA (663 aa).

The tract at residues 1 to 304 (MKAVVFAYHD…ELGLVAGMRL (304 aa)) is formyltransferase ArnAFT. Catalysis depends on H104, which acts as the Proton donor; for formyltransferase activity. (6R)-10-formyltetrahydrofolate-binding positions include R114 and 136–140 (TMRPD). Residues 316–663 (RLTRVLILGV…GAVSTGVEHD (348 aa)) form a dehydrogenase ArnADH region. NAD(+) contacts are provided by residues D349 and 370-371 (DI). UDP-alpha-D-glucuronate contacts are provided by residues A395, Y400, and 434–435 (TS). E436 functions as the Proton acceptor; for decarboxylase activity in the catalytic mechanism. UDP-alpha-D-glucuronate-binding positions include R462, N494, 528–537 (QLVDGGAQKR), and Y615. R621 acts as the Proton donor; for decarboxylase activity in catalysis.

The protein in the N-terminal section; belongs to the Fmt family. UDP-L-Ara4N formyltransferase subfamily. It in the C-terminal section; belongs to the NAD(P)-dependent epimerase/dehydratase family. UDP-glucuronic acid decarboxylase subfamily. As to quaternary structure, homohexamer, formed by a dimer of trimers.

The catalysed reaction is UDP-alpha-D-glucuronate + NAD(+) = UDP-beta-L-threo-pentopyranos-4-ulose + CO2 + NADH. It carries out the reaction UDP-4-amino-4-deoxy-beta-L-arabinose + (6R)-10-formyltetrahydrofolate = UDP-4-deoxy-4-formamido-beta-L-arabinose + (6S)-5,6,7,8-tetrahydrofolate + H(+). It functions in the pathway nucleotide-sugar biosynthesis; UDP-4-deoxy-4-formamido-beta-L-arabinose biosynthesis; UDP-4-deoxy-4-formamido-beta-L-arabinose from UDP-alpha-D-glucuronate: step 1/3. The protein operates within nucleotide-sugar biosynthesis; UDP-4-deoxy-4-formamido-beta-L-arabinose biosynthesis; UDP-4-deoxy-4-formamido-beta-L-arabinose from UDP-alpha-D-glucuronate: step 3/3. Its pathway is bacterial outer membrane biogenesis; lipopolysaccharide biosynthesis. Functionally, bifunctional enzyme that catalyzes the oxidative decarboxylation of UDP-glucuronic acid (UDP-GlcUA) to UDP-4-keto-arabinose (UDP-Ara4O) and the addition of a formyl group to UDP-4-amino-4-deoxy-L-arabinose (UDP-L-Ara4N) to form UDP-L-4-formamido-arabinose (UDP-L-Ara4FN). The modified arabinose is attached to lipid A and is required for resistance to polymyxin and cationic antimicrobial peptides. This Aeromonas salmonicida (strain A449) protein is Bifunctional polymyxin resistance protein ArnA.